The chain runs to 254 residues: Probable phosphatase Shew185_1467 (254 aa).

Zn(2+)-binding residues include histidine 8, histidine 10, histidine 16, histidine 41, glutamate 74, histidine 102, histidine 132, aspartate 193, and histidine 195.

This sequence belongs to the PHP family. It depends on Zn(2+) as a cofactor.

This chain is Probable phosphatase Shew185_1467, found in Shewanella baltica (strain OS185).